The primary structure comprises 150 residues: Putative HTH-type transcriptional regulator HI_0379 (150 aa).

One can recognise an HTH rrf2-type domain in the interval 2-131 (KLTSKGRYAV…NEITLAELVN (130 aa)).

The sequence is that of Putative HTH-type transcriptional regulator HI_0379 from Haemophilus influenzae (strain ATCC 51907 / DSM 11121 / KW20 / Rd).